The following is a 227-amino-acid chain: GTP:AMP phosphotransferase AK3, mitochondrial (227 aa).

Residues glycine 17, glycine 19, lysine 20, glycine 21, and threonine 22 each coordinate GTP. Position 20 is an N6-succinyllysine (lysine 20). At lysine 34 the chain carries N6-acetyllysine. The residue at position 37 (serine 37) is a Phosphoserine. The segment at 37–66 (SSGDLLRDNMLRGTEIGVLAKAFIDQGKLI) is NMP. AMP is bound by residues serine 38 and arginine 43. Residue lysine 57 is modified to N6-succinyllysine. Lysine 64 lines the AMP pocket. An N6-acetyllysine; alternate mark is found at lysine 64 and lysine 80. Residues lysine 64 and lysine 80 each carry the N6-succinyllysine; alternate modification. Positions 91, 94, and 98 each coordinate AMP. An LID region spans residues 127 to 164 (ARWIHPASGRVYNIEFNPPKTVGIDDLTGEPLIQREDD). Positions 128, 138, 139, 161, and 172 each coordinate GTP. An N6-acetyllysine; alternate mark is found at lysine 174 and lysine 189. 2 positions are modified to N6-succinyllysine; alternate: lysine 174 and lysine 189. Threonine 201 serves as a coordination point for GTP. Residue lysine 203 is modified to N6-acetyllysine.

It belongs to the adenylate kinase family. AK3 subfamily. In terms of assembly, monomer. In terms of tissue distribution, highly expressed in heart, skeletal muscle and liver, moderately expressed in pancreas and kidney, and weakly expressed in placenta, brain and lung.

The protein localises to the mitochondrion matrix. The catalysed reaction is a ribonucleoside 5'-triphosphate + AMP = a ribonucleoside 5'-diphosphate + ADP. The enzyme catalyses GTP + AMP = GDP + ADP. It carries out the reaction ITP + AMP = IDP + ADP. With respect to regulation, inhibited by ATP. Functionally, mitochondrial adenylate kinase with a specific GTP:AMP phosphotransferase activity. Could also use ITP as phosphate donor. Its physiological function is to recycle GTP into GDP which is necessary for the TCA cycle in the mitochondrial matrix. This chain is GTP:AMP phosphotransferase AK3, mitochondrial, found in Homo sapiens (Human).